The chain runs to 302 residues: MEEYKLSHLKELEAESIHIIREVAAEFENPVMLYSIGKDSSVMVRLAEKAFYPGKVPFPLMHIDSKWKFKEMIQFRDEYAKKHGWNLIVESNMEAFHAGVGPFTHGSKVHTDLMKTQALLHALDKYKFDAAFGGARRDEEKSRAKERIFSFRDKFHQWDPKNQRPELWDIYNARVHKGESIRVFPISNWTELDIWQYIRLENIPIVPLYYAKERPVINLDGNIIMADDDRLPEKYRDQIEMKMVRFRTLGCWPLTGAVESGAATIEEIVEEMMTTTKSERTTRVIDFDQEGSMEQKKREGYF.

This sequence belongs to the PAPS reductase family. CysD subfamily. Heterodimer composed of CysD, the smaller subunit, and CysN.

It carries out the reaction sulfate + ATP + H(+) = adenosine 5'-phosphosulfate + diphosphate. It functions in the pathway sulfur metabolism; hydrogen sulfide biosynthesis; sulfite from sulfate: step 1/3. In terms of biological role, with CysN forms the ATP sulfurylase (ATPS) that catalyzes the adenylation of sulfate producing adenosine 5'-phosphosulfate (APS) and diphosphate, the first enzymatic step in sulfur assimilation pathway. APS synthesis involves the formation of a high-energy phosphoric-sulfuric acid anhydride bond driven by GTP hydrolysis by CysN coupled to ATP hydrolysis by CysD. The sequence is that of Sulfate adenylyltransferase subunit 2 from Bacteroides thetaiotaomicron (strain ATCC 29148 / DSM 2079 / JCM 5827 / CCUG 10774 / NCTC 10582 / VPI-5482 / E50).